Consider the following 637-residue polypeptide: 3D-(3,5/4)-trihydroxycyclohexane-1,2-dione hydrolase (637 aa).

Residue E66 coordinates thiamine diphosphate. The tract at residues 442–522 (SLPGDLQRLW…INILLFDNAG (81 aa)) is thiamine pyrophosphate binding. Mg(2+) is bound by residues D493 and N520.

It belongs to the TPP enzyme family. Mg(2+) is required as a cofactor. It depends on thiamine diphosphate as a cofactor.

It catalyses the reaction 3D-3,5/4-trihydroxycyclohexane-1,2-dione + H2O = 5-deoxy-D-glucuronate + H(+). It participates in polyol metabolism; myo-inositol degradation into acetyl-CoA; acetyl-CoA from myo-inositol: step 3/7. Involved in the cleavage of the C1-C2 bond of 3D-(3,5/4)-trihydroxycyclohexane-1,2-dione (THcHDO) to yield 5-deoxy-glucuronate (5DG). This is 3D-(3,5/4)-trihydroxycyclohexane-1,2-dione hydrolase from Shouchella clausii (strain KSM-K16) (Alkalihalobacillus clausii).